A 292-amino-acid chain; its full sequence is ATP-dependent Clp protease proteolytic subunit 4, chloroplastic (292 aa).

The N-terminal 65 residues, M1–M65, are a transit peptide targeting the chloroplast. An N-acetylserine modification is found at S66. The Nucleophile role is filled by S158. H183 is an active-site residue.

Belongs to the peptidase S14 family. In terms of assembly, component of the chloroplastic Clp protease core complex which consist of at least 16 proteins: CLPP4 (3 copies), CLPP5 (3 copies), CLPR4 (2 copies), ClpP1 (1 copy), CLPP6 (1 copy), CLPR2 (1 copy), CLPT1 (1 copy), CLPT2 (1 copy) and 3 copies of CLPP3 and/or CLPR1 and/or CLPR3. Interacts with CHIP. The core complex is organized in two heptameric rings, one containing CLPP3,4,5,6 in a 1:2:3:1 ratio and the other CLPP1 and CLPR1,2,3,4 in a 3:1:1:1:1 ratio. Post-translationally, ubiquitinated by CHIP. Mostly expressed in leaves. Also detected in stems, and to a lower extent, in roots (at protein level).

The protein resides in the plastid. It is found in the chloroplast stroma. The catalysed reaction is Hydrolysis of proteins to small peptides in the presence of ATP and magnesium. alpha-casein is the usual test substrate. In the absence of ATP, only oligopeptides shorter than five residues are hydrolyzed (such as succinyl-Leu-Tyr-|-NHMec, and Leu-Tyr-Leu-|-Tyr-Trp, in which cleavage of the -Tyr-|-Leu- and -Tyr-|-Trp bonds also occurs).. In terms of biological role, cleaves peptides in various proteins in a process that requires ATP hydrolysis. Has a chymotrypsin-like activity. Plays a major role in the degradation of misfolded proteins. Essential protein required for chloroplast development and integrity. Essential for Embryogenesis. The polypeptide is ATP-dependent Clp protease proteolytic subunit 4, chloroplastic (Arabidopsis thaliana (Mouse-ear cress)).